The sequence spans 644 residues: ATP-dependent zinc metalloprotease FtsH (644 aa).

Residues 1–13 are Cytoplasmic-facing; the sequence is MANNDNKHRRSMS. A helical membrane pass occupies residues 14–34; sequence MLLYIAVAIFVYLLLSNTLLP. Topologically, residues 35-117 are extracellular; the sequence is GLLRQQIQTV…SIPDNSANML (83 aa). The helical transmembrane segment at 118–138 threads the bilayer; that stretch reads MYALIQYGIPLIIFLGIGFFI. Residues 139–644 are Cytoplasmic-facing; sequence NRSLKRAMGD…DEGSSTPSEE (506 aa). 224 to 231 serves as a coordination point for ATP; that stretch reads GPPGTGKT. A Zn(2+)-binding site is contributed by His445. Residue Glu446 is part of the active site. Zn(2+)-binding residues include His449 and Asp522.

The protein in the central section; belongs to the AAA ATPase family. In the C-terminal section; belongs to the peptidase M41 family. As to quaternary structure, homohexamer. Zn(2+) is required as a cofactor.

Its subcellular location is the cell membrane. Its function is as follows. Acts as a processive, ATP-dependent zinc metallopeptidase for both cytoplasmic and membrane proteins. Plays a role in the quality control of integral membrane proteins. In Lancefieldella parvula (strain ATCC 33793 / DSM 20469 / CCUG 32760 / JCM 10300 / KCTC 3663 / VPI 0546 / 1246) (Atopobium parvulum), this protein is ATP-dependent zinc metalloprotease FtsH.